Here is a 308-residue protein sequence, read N- to C-terminus: tRNA dimethylallyltransferase (308 aa).

ATP is bound at residue 14–21 (GPTASGKT). 16–21 (TASGKT) lines the substrate pocket. 3 interaction with substrate tRNA regions span residues 39–42 (DSAL), 163–167 (QRLSR), and 244–249 (RCVGYR).

Belongs to the IPP transferase family. In terms of assembly, monomer. Requires Mg(2+) as cofactor.

It carries out the reaction adenosine(37) in tRNA + dimethylallyl diphosphate = N(6)-dimethylallyladenosine(37) in tRNA + diphosphate. Catalyzes the transfer of a dimethylallyl group onto the adenine at position 37 in tRNAs that read codons beginning with uridine, leading to the formation of N6-(dimethylallyl)adenosine (i(6)A). The protein is tRNA dimethylallyltransferase of Shewanella baltica (strain OS223).